The sequence spans 339 residues: DNA-directed RNA polymerase subunit alpha (339 aa).

Residues 1 to 233 (MVREEVAGST…DLFLPFLHAE (233 aa)) are alpha N-terminal domain (alpha-NTD). An alpha C-terminal domain (alpha-CTD) region spans residues 266-339 (GIPLNCIFID…IDLLKNKLSF (74 aa)).

This sequence belongs to the RNA polymerase alpha chain family. As to quaternary structure, in plastids the minimal PEP RNA polymerase catalytic core is composed of four subunits: alpha, beta, beta', and beta''. When a (nuclear-encoded) sigma factor is associated with the core the holoenzyme is formed, which can initiate transcription.

The protein localises to the plastid. Its subcellular location is the chloroplast. The enzyme catalyses RNA(n) + a ribonucleoside 5'-triphosphate = RNA(n+1) + diphosphate. Functionally, DNA-dependent RNA polymerase catalyzes the transcription of DNA into RNA using the four ribonucleoside triphosphates as substrates. This is DNA-directed RNA polymerase subunit alpha from Elymus canadensis (Canada wild rye).